Here is a 391-residue protein sequence, read N- to C-terminus: Inactive polyketide synthase 2 (391 aa).

Cys-164 is a catalytic residue.

The protein belongs to the thiolase-like superfamily. Chalcone/stilbene synthases family. Homodimer.

This Rubus idaeus (Raspberry) protein is Inactive polyketide synthase 2 (PKS2).